A 59-amino-acid chain; its full sequence is Small ribosomal subunit protein bS21 (59 aa).

Belongs to the bacterial ribosomal protein bS21 family.

In Acaryochloris marina (strain MBIC 11017), this protein is Small ribosomal subunit protein bS21.